The following is a 412-amino-acid chain: Dihydrolipoyllysine-residue acetyltransferase component of pyruvate dehydrogenase complex (412 aa).

A Lipoyl-binding domain is found at 2–78; the sequence is PIKILMPALS…PVNSLIAVLS (77 aa). The residue at position 43 (lysine 43) is an N6-lipoyllysine. Residues 132–169 enclose the Peripheral subunit-binding (PSBD) domain; the sequence is FASPLAKRLAKMRNIRFESVKGSGPHGRIVKQDILSYT. Residue histidine 385 is part of the active site.

Belongs to the 2-oxoacid dehydrogenase family. In terms of assembly, forms a 24-polypeptide structural core with octahedral symmetry. It depends on (R)-lipoate as a cofactor.

The catalysed reaction is N(6)-[(R)-dihydrolipoyl]-L-lysyl-[protein] + acetyl-CoA = N(6)-[(R)-S(8)-acetyldihydrolipoyl]-L-lysyl-[protein] + CoA. In terms of biological role, the pyruvate dehydrogenase complex catalyzes the overall conversion of pyruvate to acetyl-CoA and CO(2). It contains multiple copies of three enzymatic components: pyruvate dehydrogenase (E1), dihydrolipoamide acetyltransferase (E2) and lipoamide dehydrogenase (E3). The polypeptide is Dihydrolipoyllysine-residue acetyltransferase component of pyruvate dehydrogenase complex (pdhC) (Rickettsia conorii (strain ATCC VR-613 / Malish 7)).